The following is a 258-amino-acid chain: 5'-nucleotidase SurE (258 aa).

Aspartate 9, aspartate 10, serine 42, and asparagine 96 together coordinate a divalent metal cation.

It belongs to the SurE nucleotidase family. A divalent metal cation serves as cofactor.

It is found in the cytoplasm. It carries out the reaction a ribonucleoside 5'-phosphate + H2O = a ribonucleoside + phosphate. In terms of biological role, nucleotidase that shows phosphatase activity on nucleoside 5'-monophosphates. In Campylobacter jejuni subsp. jejuni serotype O:2 (strain ATCC 700819 / NCTC 11168), this protein is 5'-nucleotidase SurE.